A 199-amino-acid chain; its full sequence is Protein Maeo_0138 (199 aa).

The 191-residue stretch at 7 to 197 (EEGKFAVKFA…ELSPNGKIVE (191 aa)) folds into the AMMECR1 domain.

This is Protein Maeo_0138 from Methanococcus aeolicus (strain ATCC BAA-1280 / DSM 17508 / OCM 812 / Nankai-3).